Reading from the N-terminus, the 228-residue chain is Putative L-ribulose-5-phosphate 4-epimerase UlaF (228 aa).

Substrate is bound by residues 26-27 (GN), 43-44 (SG), and 72-73 (SS). Zn(2+)-binding residues include Asp74, His93, and His95. The active-site Proton donor/acceptor is Asp118. His167 serves as a coordination point for Zn(2+). Tyr225 functions as the Proton donor/acceptor in the catalytic mechanism.

It belongs to the aldolase class II family. AraD/FucA subfamily. Zn(2+) serves as cofactor.

The enzyme catalyses L-ribulose 5-phosphate = D-xylulose 5-phosphate. It functions in the pathway cofactor degradation; L-ascorbate degradation; D-xylulose 5-phosphate from L-ascorbate: step 4/4. In terms of biological role, catalyzes the isomerization of L-ribulose 5-phosphate to D-xylulose 5-phosphate. Is involved in the anaerobic L-ascorbate utilization. The protein is Putative L-ribulose-5-phosphate 4-epimerase UlaF of Shigella boydii serotype 4 (strain Sb227).